Reading from the N-terminus, the 89-residue chain is Small ribosomal subunit protein bS20 (89 aa).

A compositionally biased stretch (basic residues) spans 1-12 (MANIKSAKKRVK). The segment at 1–20 (MANIKSAKKRVKQTVVRNER) is disordered.

It belongs to the bacterial ribosomal protein bS20 family.

Its function is as follows. Binds directly to 16S ribosomal RNA. This is Small ribosomal subunit protein bS20 from Xylella fastidiosa (strain 9a5c).